We begin with the raw amino-acid sequence, 495 residues long: Ribitol 5-phosphate transferase FKRP (495 aa).

The Cytoplasmic portion of the chain corresponds to 1–6 (MRLTRC). A helical transmembrane segment spans residues 7-29 (QAALAAAITLNLLVLFYVSWLQH). Residues 30-495 (QPRNSRARGP…PALLSLTGSG (466 aa)) lie on the Lumenal side of the membrane. A disulfide bond links Cys168 and Cys191. N-linked (GlcNAc...) asparagine glycosylation is found at Asn172 and Asn209. Zn(2+) is bound by residues Cys289, Cys296, Cys317, and Cys318. Residues 289 to 318 (CNKETTRCFGTVVGDTPAYLYEERWTPPCC) are zinc finger loop. CDP-L-ribitol is bound by residues Gly345, Arg352, 359–364 (WDYDVD), 437–438 (QD), and 480–482 (NPQ). Residues Asp360, Asp362, and Asp364 each coordinate Mg(2+).

The protein belongs to the LicD transferase family. In terms of assembly, homodimer; disulfide-linked. Tetramer. Forms a complex composed of FKRP, FKTN/fukutin, and RXYLT1/TMEM5. Also exists as large multimeric protein complexes. May interact with the dystrophin-glycoprotein complex (DGC). Mg(2+) is required as a cofactor. In terms of processing, N-glycosylated. Expressed in the retina (at protein level). Expressed predominantly in skeletal muscle, placenta, and heart and relatively weakly in brain, lung, liver, kidney, and pancreas.

Its subcellular location is the golgi apparatus membrane. It localises to the secreted. The protein resides in the cell membrane. The protein localises to the sarcolemma. It is found in the rough endoplasmic reticulum. Its subcellular location is the cytoplasm. The catalysed reaction is 3-O-[Rib-ol-P-3-beta-D-GalNAc-(1-&gt;3)-beta-D-GlcNAc-(1-&gt;4)-(O-6-P-alpha-D-Man)]-Thr-[protein] + CDP-L-ribitol = 3-O-[Rib-ol-P-Rib-ol-P-3-beta-D-GalNAc-(1-&gt;3)-beta-D-GlcNAc-(1-&gt;4)-(O-6-P-alpha-D-Man)]-Thr-[protein] + CMP + H(+). It functions in the pathway protein modification; protein glycosylation. Functionally, catalyzes the transfer of a ribitol 5-phosphate from CDP-L-ribitol to the ribitol 5-phosphate previously attached by FKTN/fukutin to the phosphorylated O-mannosyl trisaccharide (N-acetylgalactosamine-beta-3-N-acetylglucosamine-beta-4-(phosphate-6-)mannose), a carbohydrate structure present in alpha-dystroglycan (DAG1). This constitutes the second step in the formation of the ribose 5-phosphate tandem repeat which links the phosphorylated O-mannosyl trisaccharide to the ligand binding moiety composed of repeats of 3-xylosyl-alpha-1,3-glucuronic acid-beta-1. The protein is Ribitol 5-phosphate transferase FKRP of Homo sapiens (Human).